A 75-amino-acid polypeptide reads, in one-letter code: UPF0346 protein LEUM_0763 (75 aa).

This sequence belongs to the UPF0346 family.

The polypeptide is UPF0346 protein LEUM_0763 (Leuconostoc mesenteroides subsp. mesenteroides (strain ATCC 8293 / DSM 20343 / BCRC 11652 / CCM 1803 / JCM 6124 / NCDO 523 / NBRC 100496 / NCIMB 8023 / NCTC 12954 / NRRL B-1118 / 37Y)).